A 160-amino-acid polypeptide reads, in one-letter code: Nascent polypeptide-associated complex subunit beta (160 aa).

2 disordered regions span residues 16 to 36 (GGKGTPRRKVKKVHKSSGTDD) and 118 to 160 (ESYQ…TEVE). A compositionally biased stretch (basic residues) spans 20–30 (TPRRKVKKVHK). The NAC-A/B domain maps to 33–98 (GTDDKKLQTA…GEDKELTELV (66 aa)). A compositionally biased stretch (basic and acidic residues) spans 124–134 (QKEKGEDGDKK). A compositionally biased stretch (acidic residues) spans 135–145 (DDDDEDDDDIP).

The protein belongs to the NAC-beta family. As to quaternary structure, part of the nascent polypeptide-associated complex (NAC), consisting of EGD2 and EGD1. NAC associates with ribosomes via EGD1.

Its subcellular location is the cytoplasm. The protein resides in the nucleus. Functionally, component of the nascent polypeptide-associated complex (NAC), a dynamic component of the ribosomal exit tunnel, protecting the emerging polypeptides from interaction with other cytoplasmic proteins to ensure appropriate nascent protein targeting. The NAC complex also promotes mitochondrial protein import by enhancing productive ribosome interactions with the outer mitochondrial membrane and blocks the inappropriate interaction of ribosomes translating non-secretory nascent polypeptides with translocation sites in the membrane of the endoplasmic reticulum. EGD1 may act as a transcription factor that exert a negative effect on the expression of several genes that are transcribed by RNA polymerase II. This chain is Nascent polypeptide-associated complex subunit beta (EGD1), found in Phaeosphaeria nodorum (strain SN15 / ATCC MYA-4574 / FGSC 10173) (Glume blotch fungus).